Here is a 1388-residue protein sequence, read N- to C-terminus: Dicer-like protein 2 (1388 aa).

A Helicase ATP-binding domain is found at 23–203 (MLEASMKENI…LLTVESNLDA (181 aa)). Residue 36 to 43 (MDTGSGKT) coordinates ATP. Residues 144–147 (DEAH) carry the DEAH box motif. A Helicase C-terminal domain is found at 371 to 537 (SLLNFLDSLD…DDERQLQSVS (167 aa)). The 95-residue stretch at 564–658 (AMAHLHHFCA…LPLTKRPELK (95 aa)) folds into the Dicer dsRNA-binding fold domain. RNase III domains lie at 919-1059 (ATRL…MDGG) and 1098-1281 (NERL…VDSG). Mg(2+) contacts are provided by Glu1137, Asp1267, and Glu1270.

The protein belongs to the helicase family. Dicer subfamily. It depends on Mg(2+) as a cofactor. The cofactor is Mn(2+).

In terms of biological role, dicer-like endonuclease involved in cleaving double-stranded RNA in the RNA interference (RNAi) pathway. Produces 21 to 25 bp dsRNAs (siRNAs) which target the selective destruction of homologous RNAs leading to sequence-specific suppression of gene expression, called post-transcriptional gene silencing (PTGS). Part of a broad host defense response against viral infection and transposons. The sequence is that of Dicer-like protein 2 (dcl2) from Neosartorya fischeri (strain ATCC 1020 / DSM 3700 / CBS 544.65 / FGSC A1164 / JCM 1740 / NRRL 181 / WB 181) (Aspergillus fischerianus).